The primary structure comprises 146 residues: Hemoglobin subunit beta (146 aa).

Valine 1 carries the post-translational modification N-acetylvaline. The Globin domain maps to 2-146; that stretch reads HLSGGEKSAV…VAHALGHKYH (145 aa). A Phosphothreonine modification is found at threonine 12. Lysine 59 carries the N6-acetyllysine modification. Histidine 63 contributes to the heme b binding site. Lysine 82 is modified (N6-acetyllysine). Position 92 (histidine 92) interacts with heme b. Residue cysteine 93 is modified to S-nitrosocysteine. The residue at position 144 (lysine 144) is an N6-acetyllysine.

The protein belongs to the globin family. Heterotetramer of two alpha chains and two beta chains. As to expression, red blood cells.

Its function is as follows. Involved in oxygen transport from the lung to the various peripheral tissues. The sequence is that of Hemoglobin subunit beta (HBB) from Ornithorhynchus anatinus (Duckbill platypus).